Reading from the N-terminus, the 412-residue chain is Multifunctional CCA protein (412 aa).

ATP is bound by residues glycine 8 and arginine 11. 2 residues coordinate CTP: glycine 8 and arginine 11. Mg(2+) is bound by residues aspartate 21 and aspartate 23. Positions 91, 137, and 140 each coordinate ATP. Residues arginine 91, arginine 137, and arginine 140 each contribute to the CTP site. The region spanning 228 to 329 (TGIHTLMTLS…VKLFDSIDAW (102 aa)) is the HD domain.

Belongs to the tRNA nucleotidyltransferase/poly(A) polymerase family. Bacterial CCA-adding enzyme type 1 subfamily. As to quaternary structure, monomer. Can also form homodimers and oligomers. Requires Mg(2+) as cofactor. Ni(2+) serves as cofactor.

The catalysed reaction is a tRNA precursor + 2 CTP + ATP = a tRNA with a 3' CCA end + 3 diphosphate. It catalyses the reaction a tRNA with a 3' CCA end + 2 CTP + ATP = a tRNA with a 3' CCACCA end + 3 diphosphate. In terms of biological role, catalyzes the addition and repair of the essential 3'-terminal CCA sequence in tRNAs without using a nucleic acid template. Adds these three nucleotides in the order of C, C, and A to the tRNA nucleotide-73, using CTP and ATP as substrates and producing inorganic pyrophosphate. tRNA 3'-terminal CCA addition is required both for tRNA processing and repair. Also involved in tRNA surveillance by mediating tandem CCA addition to generate a CCACCA at the 3' terminus of unstable tRNAs. While stable tRNAs receive only 3'-terminal CCA, unstable tRNAs are marked with CCACCA and rapidly degraded. The protein is Multifunctional CCA protein of Escherichia coli O1:K1 / APEC.